The sequence spans 100 residues: Class II hydrophobin 4 (100 aa).

An N-terminal signal peptide occupies residues Met1–Ala17. Cystine bridges form between Cys29-Cys79, Cys40-Cys70, Cys41-Cys53, and Cys80-Cys92.

It belongs to the cerato-ulmin hydrophobin family.

Its subcellular location is the secreted. It localises to the cell wall. Aerial growth, conidiation, and dispersal of filamentous fungi in the environment rely upon a capability of their secreting small amphipathic proteins called hydrophobins (HPBs) with low sequence identity. Class I can self-assemble into an outermost layer of rodlet bundles on aerial cell surfaces, conferring cellular hydrophobicity that supports fungal growth, development and dispersal; whereas Class II form highly ordered films at water-air interfaces through intermolecular interactions but contribute nothing to the rodlet structure. Does not seem to be important for the ability to cause seedling disease. The chain is Class II hydrophobin 4 from Gibberella moniliformis (Maize ear and stalk rot fungus).